The chain runs to 352 residues: ADP-ribosylation factor GTPase-activating protein GCS1 (352 aa).

Residues 11 to 127 form the Arf-GAP domain; sequence RRRLLQLQKI…LTCLCEDRVF (117 aa). Residues 26 to 49 form a C4-type zinc finger; the sequence is CMDCGAPNPQWATPKFGAFICLEC. Residues 138 to 151 show a composition bias toward low complexity; sequence SKLSATSQTAASAT. 2 disordered regions span residues 138–181 and 196–231; these read SKLS…ANFQ and NQSR…GSSN. At Thr151 the chain carries Phosphothreonine. Ser157 is modified (phosphoserine). The residue at position 161 (Thr161) is a Phosphothreonine. Phosphoserine is present on Ser168. Over residues 168–179 the composition is skewed to polar residues; it reads SATPANSSNGAN. Thr170 carries the post-translational modification Phosphothreonine. A Phosphoserine modification is found at Ser260. Over residues 315-330 the composition is skewed to polar residues; that stretch reads NGNAEDSSTAGNTTHT. The tract at residues 315–352 is disordered; it reads NGNAEDSSTAGNTTHTEYQKIDNNDKKNEQDEDKWDDF. A compositionally biased stretch (basic and acidic residues) spans 331 to 343; sequence EYQKIDNNDKKNE.

Its subcellular location is the cytoplasm. It is found in the mitochondrion. The protein resides in the perinuclear region. It localises to the golgi apparatus. Its function is as follows. GTPase-activating protein (GAP) for ARF1 and ARF2. Involved in intracellular vesicular transport. Required for transport from the trans-Golgi network. Implicated in the regulation of retrograde transport from the Golgi to the ER and in actin cytoskeletal organization. May be involved in the maintenance of mitochondrial morphology, possibly through organizing the actin cytoskeleton in Saccharomyces. This Saccharomyces cerevisiae (strain ATCC 204508 / S288c) (Baker's yeast) protein is ADP-ribosylation factor GTPase-activating protein GCS1 (GCS1).